A 477-amino-acid chain; its full sequence is Argininosuccinate synthase (477 aa).

ATP-binding positions include 17–25 (AFSGGLDTS) and A43. Position 99 (Y99) interacts with L-citrulline. Positions 129 and 131 each coordinate ATP. L-aspartate-binding residues include T131, N135, and D136. L-citrulline is bound at residue N135. An ATP-binding site is contributed by D136. L-citrulline-binding residues include R139 and S192. D194 provides a ligand contact to ATP. 3 residues coordinate L-citrulline: T201, E203, and E280. A disordered region spans residues 450 to 477 (DQITENPEVQAEPEEEALDAAAMEAGTD). The segment covering 468 to 477 (DAAAMEAGTD) has biased composition (low complexity).

Belongs to the argininosuccinate synthase family. Type 2 subfamily. Homotetramer.

Its subcellular location is the cytoplasm. The enzyme catalyses L-citrulline + L-aspartate + ATP = 2-(N(omega)-L-arginino)succinate + AMP + diphosphate + H(+). Its pathway is amino-acid biosynthesis; L-arginine biosynthesis; L-arginine from L-ornithine and carbamoyl phosphate: step 2/3. The sequence is that of Argininosuccinate synthase from Nocardioides sp. (strain ATCC BAA-499 / JS614).